A 384-amino-acid polypeptide reads, in one-letter code: Deoxyguanosinetriphosphate triphosphohydrolase-like protein (384 aa).

Positions 13 to 42 (LASYASDPSKTRGRRHSEPPPENRTEFQRD) are disordered. Over residues 28 to 42 (HSEPPPENRTEFQRD) the composition is skewed to basic and acidic residues. Residues 73–208 (RLTHSLEVAQ…ANLADEVAYN (136 aa)) form the HD domain.

The protein belongs to the dGTPase family. Type 2 subfamily.

The protein is Deoxyguanosinetriphosphate triphosphohydrolase-like protein of Bordetella bronchiseptica (strain ATCC BAA-588 / NCTC 13252 / RB50) (Alcaligenes bronchisepticus).